Reading from the N-terminus, the 300-residue chain is Probable ABC transporter permease protein YurM (300 aa).

6 consecutive transmembrane segments (helical) span residues 37–57 (VWVF…WMVM), 98–118 (VIVT…AAYG), 129–149 (FFLV…LVPL), 161–181 (TYWA…IILI), 204–224 (FGVF…TSGI), and 264–284 (WGVL…LFLL). Residues 94–285 (FMNSVIVTAL…APIIILFLLM (192 aa)) form the ABC transmembrane type-1 domain.

The protein belongs to the binding-protein-dependent transport system permease family. MalFG subfamily.

The protein resides in the cell membrane. In terms of biological role, probably part of the binding-protein-dependent transport system YurMNO. Probably responsible for the translocation of the substrate across the membrane. The sequence is that of Probable ABC transporter permease protein YurM (yurM) from Bacillus subtilis (strain 168).